The following is a 395-amino-acid chain: Carbohydrate sulfotransferase 6 (395 aa).

The Cytoplasmic portion of the chain corresponds to 1 to 5 (MWLPR). A helical; Signal-anchor for type II membrane protein membrane pass occupies residues 6-26 (VSSTAVTALLLAQTFLLLFLV). Residues 27–395 (SRPGPSSPAG…ASSTASHPRN (369 aa)) are Lumenal-facing. Position 49–55 (49–55 (WRSGSSF)) interacts with 3'-phosphoadenylyl sulfate. A glycan (N-linked (GlcNAc...) asparagine) is linked at N116. 202–210 (RDPRAVLRS) contacts 3'-phosphoadenylyl sulfate. 3 N-linked (GlcNAc...) asparagine glycosylation sites follow: N229, N305, and N328.

Belongs to the sulfotransferase 1 family. Gal/GlcNAc/GalNAc subfamily. In terms of tissue distribution, expressed in cornea. Mainly expressed in brain. Also expressed in spinal cord and trachea.

It is found in the golgi apparatus membrane. The catalysed reaction is 3'-phosphoadenylyl sulfate + keratan = adenosine 3',5'-bisphosphate + keratan 6'-sulfate.. In terms of biological role, sulfotransferase that utilizes 3'-phospho-5'-adenylyl sulfate (PAPS) as sulfonate donor to catalyze the transfer of sulfate to position 6 of non-reducing N-acetylglucosamine (GlcNAc) residues of keratan. Cooperates with B4GALT4 galactosyltransferase and B3GNT7 N-acetylglucosaminyltransferase to construct and elongate the sulfated disaccharide unit [-&gt;3Galbeta1-&gt;4(6-sulfoGlcNAcbeta)1-&gt;] within keratan sulfate polymer. Involved in biosynthesis of keratan sulfate in cornea, with an impact on proteoglycan fibril organization and corneal transparency. Involved in sulfation of endothelial mucins such as GLYCAM1. The chain is Carbohydrate sulfotransferase 6 from Homo sapiens (Human).